Reading from the N-terminus, the 240-residue chain is MRGIYLVGTDTEIGKTVISAALVYILCKAGYKTAYFKAALSDAEELNGKLIPGDTEFVCSLSGIQEDYEKLTPYIYKTAVSPYLASKIENKPIDIQVIKDKLTKLENEYGYVLCEGSGGVICPITDVDNKIYTLGNLIKDMKMDVILVCRAGLGTINHTVLTVSYLKNNGIEVKGIIVNQYEENRLCKDNINMIKKMTGIPILGVMPYINENKKNFIEELKYNACNIFKADEIAGLMKEV.

Residue 12–17 (EIGKTV) coordinates ATP. Position 16 (Thr16) interacts with Mg(2+). Residue Lys37 is part of the active site. Residue Ser41 participates in substrate binding. Residues Asp54, 115-118 (EGSG), 179-180 (NQ), and 207-209 (PYI) contribute to the ATP site. Mg(2+) is bound by residues Asp54 and Glu115.

Belongs to the dethiobiotin synthetase family. In terms of assembly, homodimer. Mg(2+) serves as cofactor.

It localises to the cytoplasm. The enzyme catalyses (7R,8S)-7,8-diammoniononanoate + CO2 + ATP = (4R,5S)-dethiobiotin + ADP + phosphate + 3 H(+). It functions in the pathway cofactor biosynthesis; biotin biosynthesis; biotin from 7,8-diaminononanoate: step 1/2. In terms of biological role, catalyzes a mechanistically unusual reaction, the ATP-dependent insertion of CO2 between the N7 and N8 nitrogen atoms of 7,8-diaminopelargonic acid (DAPA, also called 7,8-diammoniononanoate) to form a ureido ring. The chain is ATP-dependent dethiobiotin synthetase BioD from Clostridium acetobutylicum (strain ATCC 824 / DSM 792 / JCM 1419 / IAM 19013 / LMG 5710 / NBRC 13948 / NRRL B-527 / VKM B-1787 / 2291 / W).